The following is a 123-amino-acid chain: uncharacterized protein (123 aa).

It to insertion element IS1016 transposase.

This is an uncharacterized protein from Haemophilus influenzae (strain ATCC 51907 / DSM 11121 / KW20 / Rd).